Consider the following 362-residue polypeptide: UDP-N-acetylglucosamine--N-acetylmuramyl-(pentapeptide) pyrophosphoryl-undecaprenol N-acetylglucosamine transferase (362 aa).

UDP-N-acetyl-alpha-D-glucosamine is bound by residues 10-12, Asn-124, Arg-161, Ser-195, and Gln-291; that span reads TAG.

The protein belongs to the glycosyltransferase 28 family. MurG subfamily.

Its subcellular location is the cell membrane. The enzyme catalyses di-trans,octa-cis-undecaprenyl diphospho-N-acetyl-alpha-D-muramoyl-L-alanyl-D-glutamyl-meso-2,6-diaminopimeloyl-D-alanyl-D-alanine + UDP-N-acetyl-alpha-D-glucosamine = di-trans,octa-cis-undecaprenyl diphospho-[N-acetyl-alpha-D-glucosaminyl-(1-&gt;4)]-N-acetyl-alpha-D-muramoyl-L-alanyl-D-glutamyl-meso-2,6-diaminopimeloyl-D-alanyl-D-alanine + UDP + H(+). Its pathway is cell wall biogenesis; peptidoglycan biosynthesis. Its function is as follows. Cell wall formation. Catalyzes the transfer of a GlcNAc subunit on undecaprenyl-pyrophosphoryl-MurNAc-pentapeptide (lipid intermediate I) to form undecaprenyl-pyrophosphoryl-MurNAc-(pentapeptide)GlcNAc (lipid intermediate II). The chain is UDP-N-acetylglucosamine--N-acetylmuramyl-(pentapeptide) pyrophosphoryl-undecaprenol N-acetylglucosamine transferase from Streptomyces collinus.